Here is a 189-residue protein sequence, read N- to C-terminus: MGFLDFFKKTATLDLIAPISGKVMSIDKVPDEAFAEKIVGDGIAILPTSNELLAPCDGKIGKIFKTNHAFSLETKEGVEIFVHFGINTLNLNGKGFTRVAEEGINVKQGEVIIRLDLEYLKEHSESVITPVVIANSDEVSSIEYSFGRLENDSEYILSSSTVLTEEIRHKISQTKPVIAGKDLVLRVKK.

A PTS EIIA type-1 domain is found at 31 to 135 (DEAFAEKIVG…SVITPVVIAN (105 aa)). H68 and H83 together coordinate Zn(2+). The active-site Tele-phosphohistidine intermediate; for EIIA activity is H83. Residue H83 is modified to Phosphohistidine; by HPr.

In terms of assembly, heterodimer with glycerol kinase (glpk). Zn(2+) serves as cofactor.

Its subcellular location is the cytoplasm. Its function is as follows. The phosphoenolpyruvate-dependent sugar phosphotransferase system (sugar PTS), a major carbohydrate active transport system, catalyzes the phosphorylation of incoming sugar substrates concomitantly with their translocation across the cell membrane. The enzyme II complex composed of PtsG and Crr is involved in glucose transport. In Borreliella burgdorferi (strain ATCC 35210 / DSM 4680 / CIP 102532 / B31) (Borrelia burgdorferi), this protein is PTS system glucose-specific EIIA component (crr).